We begin with the raw amino-acid sequence, 290 residues long: MTDEFGMVEPQEGEAFGDEWEEIDVSDDEADRIARRKDRDFDEFRMRLKDADQFKVEQSVFDDATFAAIYKLVQDGHIDAFGGPISTGKEANVFEALGGDDADVAVKIYRINASDFRHMRDYLEGDPRFENIGHDKGQVVRAWVRKEFANLERAQRAGVRVPKPIAVQRNVLVMELVGVVDDRARRLSEVRVENPQTAYEVVREYMRRLHRAGLVHGDLSEYNLIIHDGELVVIDLGQAVTVHHPNAEEFLRRDCRNVANFFRRQGADADGDSLYEFVTGDEGEDGDGDE.

Residues 1–22 form a disordered region; the sequence is MTDEFGMVEPQEGEAFGDEWEE. The span at 11–22 shows a compositional bias: acidic residues; that stretch reads QEGEAFGDEWEE. The Protein kinase domain occupies 79 to 290; sequence DAFGGPISTG…DEGEDGDGDE (212 aa). Residues 85 to 93, Lys107, Glu175, and Val177 contribute to the ATP site; that span reads ISTGKEANV. Asp218 acts as the Proton acceptor in catalysis. Asn223 and Asp235 together coordinate Mg(2+). Asp235 (4-aspartylphosphate intermediate) is an active-site residue.

It belongs to the protein kinase superfamily. RIO-type Ser/Thr kinase family. Mg(2+) serves as cofactor. Requires Mn(2+) as cofactor. Autophosphorylated.

It carries out the reaction L-seryl-[protein] + ATP = O-phospho-L-seryl-[protein] + ADP + H(+). The catalysed reaction is L-threonyl-[protein] + ATP = O-phospho-L-threonyl-[protein] + ADP + H(+). It catalyses the reaction ATP + H2O = ADP + phosphate + H(+). Serine/threonine-protein kinase that is able to autophosphorylate as well as to phosphorylate proteasome subunit alpha 1 (PsmA1) in vitro. Despite the protein kinase domain is proposed to act predominantly as an ATPase. This chain is RIO-type serine/threonine-protein kinase Rio1 (rio1), found in Haloferax volcanii (strain ATCC 29605 / DSM 3757 / JCM 8879 / NBRC 14742 / NCIMB 2012 / VKM B-1768 / DS2) (Halobacterium volcanii).